Reading from the N-terminus, the 1526-residue chain is DNA topoisomerase 2-alpha (1526 aa).

Methionine 1 bears the N-acetylmethionine mark. Position 4 is a phosphoserine (serine 4). A Glycyl lysine isopeptide (Lys-Gly) (interchain with G-Cter in SUMO2) cross-link involves residue lysine 17. Residues asparagine 90, asparagine 118, and 146–148 each bind ATP; that span reads SSN. Residues lysine 154 and lysine 155 each participate in a glycyl lysine isopeptide (Lys-Gly) (interchain with G-Cter in SUMO2) cross-link. An ATP-binding site is contributed by 159-166; it reads GRNGYGAK. Residue threonine 280 is modified to Phosphothreonine. Residues 340–342 are interaction with DNA; sequence KKK. Residue lysine 350 forms a Glycyl lysine isopeptide (Lys-Gly) (interchain with G-Cter in SUMO2) linkage. 374-376 is a binding site for ATP; the sequence is QTK. Glycyl lysine isopeptide (Lys-Gly) (interchain with G-Cter in SUMO2) cross-links involve residues lysine 384, lysine 395, lysine 414, lysine 416, lysine 423, and lysine 438. The 118-residue stretch at 453-570 folds into the Toprim domain; the sequence is CTLILTEGDS…SLLRHRFLEE (118 aa). Glutamate 459 is a binding site for Mg(2+). Residues lysine 464, lysine 478, and lysine 527 each participate in a glycyl lysine isopeptide (Lys-Gly) (interchain with G-Cter in SUMO2) cross-link. Mg(2+) contacts are provided by aspartate 539 and aspartate 541. Glycyl lysine isopeptide (Lys-Gly) (interchain with G-Cter in SUMO2) cross-links involve residues lysine 582, lysine 597, lysine 612, lysine 620, lysine 623, lysine 630, lysine 637, lysine 653, lysine 660, and lysine 674. A Topo IIA-type catalytic domain is found at 713–1168; it reads IPSMVDGLKP…TPSDLWKEDL (456 aa). The active-site O-(5'-phospho-DNA)-tyrosine intermediate is the tyrosine 803. The tract at residues 988–997 is interaction with DNA; that stretch reads KLQTSLTCNS. Lysine 1073 is covalently cross-linked (Glycyl lysine isopeptide (Lys-Gly) (interchain with G-Cter in SUMO2)). Basic and acidic residues predominate over residues 1087–1096; that stretch reads AWKEAQQKVP. A disordered region spans residues 1087–1120; that stretch reads AWKEAQQKVPEEEENEENEESESESTSPAAESGP. A compositionally biased stretch (acidic residues) spans 1097-1109; the sequence is EEEENEENEESES. Glycyl lysine isopeptide (Lys-Gly) (interchain with G-Cter in SUMO2) cross-links involve residues lysine 1193 and lysine 1201. Serine 1210 carries the post-translational modification Phosphoserine. Positions 1229-1526 are disordered; the sequence is EKKIRRKIKS…YLEESDDDLF (298 aa). Lysine 1237 is covalently cross-linked (Glycyl lysine isopeptide (Lys-Gly) (interchain with G-Cter in SUMO1); alternate). A Glycyl lysine isopeptide (Lys-Gly) (interchain with G-Cter in SUMO2); alternate cross-link involves residue lysine 1237. Threonine 1244 carries the phosphothreonine modification. Over residues 1254–1268 the composition is skewed to basic and acidic residues; the sequence is LRQRLEKRQKREPGT. Glycyl lysine isopeptide (Lys-Gly) (interchain with G-Cter in SUMO2) cross-links involve residues lysine 1272, lysine 1279, and lysine 1282. Residues serine 1291, serine 1293, serine 1295, and serine 1298 each carry the phosphoserine modification. Position 1323 is a phosphothreonine (threonine 1323). Residues 1326–1346 show a composition bias toward acidic residues; the sequence is LDSDDDFSGLDEKDEDEDFFP. Serine 1328 and serine 1333 each carry phosphoserine. Phosphothreonine is present on threonine 1350. Residues lysine 1359, lysine 1363, and lysine 1369 each participate in a glycyl lysine isopeptide (Lys-Gly) (interchain with G-Cter in SUMO2) cross-link. A phosphoserine mark is found at serine 1370 and serine 1373. Residue lysine 1381 forms a Glycyl lysine isopeptide (Lys-Gly) (interchain with G-Cter in SUMO2) linkage. 2 positions are modified to phosphoserine: serine 1383 and serine 1387. Positions 1417–1427 are enriched in polar residues; the sequence is TKGQSLTSTAG. A Glycyl lysine isopeptide (Lys-Gly) (interchain with G-Cter in SUMO2); alternate cross-link involves residue lysine 1418. Lysine 1418 carries the post-translational modification N6-acetyllysine; alternate. Positions 1429-1435 are interaction with PLSCR1; sequence KKRAVPK. Lysine 1438 participates in a covalent cross-link: Glycyl lysine isopeptide (Lys-Gly) (interchain with G-Cter in SUMO2); alternate. Lysine 1438 is modified (N6-acetyllysine; alternate). Glycyl lysine isopeptide (Lys-Gly) (interchain with G-Cter in SUMO2) cross-links involve residues lysine 1450 and lysine 1455. Residues serine 1465, serine 1467, serine 1470, and serine 1472 each carry the phosphoserine modification. Glycyl lysine isopeptide (Lys-Gly) (interchain with G-Cter in SUMO2) cross-links involve residues lysine 1480 and lysine 1488. Residues 1487 to 1498 show a composition bias toward basic and acidic residues; sequence LKGEERDFHVDL. Serine 1521 is subject to Phosphoserine.

Belongs to the type II topoisomerase family. Homodimer. Interacts with COPS5. Interacts with RECQL5; this stimulates DNA decatenation. Interacts with SETMAR; stimulates the topoisomerase activity. Interacts with DHX9; this interaction occurs in a E2 enzyme UBE2I- and RNA-dependent manner, negatively regulates DHX9-mediated double-stranded DNA and RNA duplex helicase activity and stimulates TOP2A-mediated supercoiled DNA relaxation activity. Interacts with HNRNPU (via C-terminus); this interaction protects the topoisomerase TOP2A from degradation and positively regulates the relaxation of supercoiled DNA in a RNA-dependent manner. Interacts with MCM3AP. Interacts with ERCC6. Interacts with PLSCR1. Interacts with GCNA; this interaction allows the resolution of topoisomerase II (TOP2A) DNA-protein cross-links. Interacts with POL1RA/RPA1 (via dock II) and UBTF in the context of Pol I complex; may assist Pol I transcription initiation by releasing supercoils occurring during DNA unwinding. Interacts with TPRN; TPRN interacts with a number of DNA damage response proteins, is recruited to sites of DNA damage and may play a role in DNA damage repair. Requires Mg(2+) as cofactor. The cofactor is Mn(2+). Ca(2+) is required as a cofactor. In terms of processing, phosphorylation has no effect on catalytic activity.

The protein resides in the cytoplasm. It is found in the nucleus. It localises to the nucleoplasm. Its subcellular location is the nucleolus. It catalyses the reaction ATP-dependent breakage, passage and rejoining of double-stranded DNA.. In terms of biological role, key decatenating enzyme that alters DNA topology by binding to two double-stranded DNA molecules, generating a double-stranded break in one of the strands, passing the intact strand through the broken strand, and religating the broken strand. May play a role in regulating the period length of BMAL1 transcriptional oscillation. This Rattus norvegicus (Rat) protein is DNA topoisomerase 2-alpha (Top2a).